The chain runs to 479 residues: Sulfate adenylyltransferase subunit 1 (479 aa).

A tr-type G domain is found at 25 to 239 (KSLLRFLTCG…EVLETVDIQR (215 aa)). A G1 region spans residues 34–41 (GSVDDGKS). Residue 34–41 (GSVDDGKS) coordinates GTP. The interval 92-96 (GITID) is G2. The tract at residues 113 to 116 (DTPG) is G3. GTP-binding positions include 113 to 117 (DTPGH) and 168 to 171 (NKMD). The interval 168–171 (NKMD) is G4. Residues 206–208 (SAL) form a G5 region.

The protein belongs to the TRAFAC class translation factor GTPase superfamily. Classic translation factor GTPase family. CysN/NodQ subfamily. As to quaternary structure, heterodimer composed of CysD, the smaller subunit, and CysN.

The enzyme catalyses sulfate + ATP + H(+) = adenosine 5'-phosphosulfate + diphosphate. The protein operates within sulfur metabolism; hydrogen sulfide biosynthesis; sulfite from sulfate: step 1/3. Its function is as follows. With CysD forms the ATP sulfurylase (ATPS) that catalyzes the adenylation of sulfate producing adenosine 5'-phosphosulfate (APS) and diphosphate, the first enzymatic step in sulfur assimilation pathway. APS synthesis involves the formation of a high-energy phosphoric-sulfuric acid anhydride bond driven by GTP hydrolysis by CysN coupled to ATP hydrolysis by CysD. The protein is Sulfate adenylyltransferase subunit 1 of Salmonella arizonae (strain ATCC BAA-731 / CDC346-86 / RSK2980).